The following is a 670-amino-acid chain: Probable beta-glucosidase N (670 aa).

The signal sequence occupies residues 1–21; it reads MHSNILPVLTSVATLLGLVQG. N51 carries an N-linked (GlcNAc...) asparagine glycan. The interval 65–87 is disordered; that stretch reads FEPSDGVRSVQGSGKDYDNPAMR. N141 is a glycosylation site (N-linked (GlcNAc...) asparagine). D152 is an active-site residue. 4 N-linked (GlcNAc...) asparagine glycosylation sites follow: N184, N248, N330, and N417.

This sequence belongs to the glycosyl hydrolase 3 family.

It localises to the secreted. The enzyme catalyses Hydrolysis of terminal, non-reducing beta-D-glucosyl residues with release of beta-D-glucose.. It participates in glycan metabolism; cellulose degradation. In terms of biological role, beta-glucosidases are one of a number of cellulolytic enzymes involved in the degradation of cellulosic biomass. Catalyzes the last step releasing glucose from the inhibitory cellobiose. The sequence is that of Probable beta-glucosidase N (bglN) from Emericella nidulans (strain FGSC A4 / ATCC 38163 / CBS 112.46 / NRRL 194 / M139) (Aspergillus nidulans).